The following is a 20-amino-acid chain: Beta-1,3-glucan-binding protein 2 (20 aa).

The protein belongs to the insect beta-1,3-glucan binding protein family. In terms of assembly, monomer.

It is found in the secreted. Functionally, involved in the recognition of invading microorganisms causing their aggregation. Activates the phenoloxidase cascade. Binds specifically to beta-1,3-glucan. Binds the A.niger cell wall component alpha-1,3-glucan, a fungal pathogen-associated molecular pattern (PAMP) that activates the host immune response. The chain is Beta-1,3-glucan-binding protein 2 from Galleria mellonella (Greater wax moth).